A 340-amino-acid polypeptide reads, in one-letter code: uncharacterized protein (340 aa).

This is an uncharacterized protein from Methanocaldococcus jannaschii (strain ATCC 43067 / DSM 2661 / JAL-1 / JCM 10045 / NBRC 100440) (Methanococcus jannaschii).